A 287-amino-acid chain; its full sequence is Hydroxysteroid 11-beta-dehydrogenase 1-like protein (287 aa).

The N-terminal stretch at 1–20 is a signal peptide; the sequence is MMKPFGKVLCAAGSLAVLLA. NADP(+) contacts are provided by residues 41-67, 92-93, and 119-121; these read GASAGIGEQMAYHYATFGAEIVLTARR, DM, and NHI. Serine 170 serves as a coordination point for substrate. The Proton acceptor role is filled by tyrosine 183. NADP(+)-binding positions include 183 to 187 and 216 to 222; these read YSATK and GLIDTDA.

The protein belongs to the short-chain dehydrogenases/reductases (SDR) family.

The protein localises to the secreted. It carries out the reaction cortisone + NADPH + H(+) = cortisol + NADP(+). Its function is as follows. Unidirectional NADP(+)-dependent cortisol dehydrogenase (in vitro). The chain is Hydroxysteroid 11-beta-dehydrogenase 1-like protein (HSD11B1L) from Gallus gallus (Chicken).